A 207-amino-acid polypeptide reads, in one-letter code: Ribosomal RNA small subunit methyltransferase G (207 aa).

Residues glycine 76, glutamine 81, 127–128 (VE), and arginine 141 contribute to the S-adenosyl-L-methionine site.

It belongs to the methyltransferase superfamily. RNA methyltransferase RsmG family.

It localises to the cytoplasm. It catalyses the reaction guanosine(527) in 16S rRNA + S-adenosyl-L-methionine = N(7)-methylguanosine(527) in 16S rRNA + S-adenosyl-L-homocysteine. Functionally, specifically methylates the N7 position of guanine in position 527 of 16S rRNA. This chain is Ribosomal RNA small subunit methyltransferase G, found in Neisseria meningitidis serogroup B (strain ATCC BAA-335 / MC58).